A 683-amino-acid polypeptide reads, in one-letter code: Long-chain-fatty-acid--CoA ligase 5 (683 aa).

A helical; Signal-anchor for type III membrane protein membrane pass occupies residues 12–32 (LPTPALICILTFGAAIFLWLI). The residue at position 32 (I32) is a Phosphoserine. Residues 33 to 683 (TRPQPVLPLL…IDSLYEHIQD (651 aa)) are Cytoplasmic-facing. An N6-acetyllysine modification is found at K361.

It belongs to the ATP-dependent AMP-binding enzyme family. Mg(2+) serves as cofactor.

It is found in the mitochondrion. The protein resides in the endoplasmic reticulum. It localises to the mitochondrion outer membrane. The protein localises to the endoplasmic reticulum membrane. Its subcellular location is the cell membrane. It carries out the reaction a long-chain fatty acid + ATP + CoA = a long-chain fatty acyl-CoA + AMP + diphosphate. The enzyme catalyses (5Z,8Z,11Z,14Z)-eicosatetraenoate + ATP + CoA = (5Z,8Z,11Z,14Z)-eicosatetraenoyl-CoA + AMP + diphosphate. The catalysed reaction is hexadecanoate + ATP + CoA = hexadecanoyl-CoA + AMP + diphosphate. It catalyses the reaction (E)-hexadec-2-enoate + ATP + CoA = (2E)-hexadecenoyl-CoA + AMP + diphosphate. It carries out the reaction 15-hydroxy-(5Z,8Z,11Z,13E)-eicosatetraenoate + ATP + CoA = 15-hydroxy-(5Z,8Z,11Z,13E)-eicosatetraenoyl-CoA + AMP + diphosphate. The enzyme catalyses 12-hydroxy-(5Z,8Z,10E,14Z)-eicosatetraenoate + ATP + CoA = 12-hydroxy-(5Z,8Z,10E,14Z)-eicosatetraenoyl-CoA + AMP + diphosphate. The catalysed reaction is 5-hydroxy-(6E,8Z,11Z,14Z)-eicosatetraenoate + ATP + CoA = 5-hydroxy-(6E,8Z,11Z,14Z)-eicosatetraenoyl-CoA + AMP + diphosphate. It catalyses the reaction 14,15-epoxy-(5Z,8Z,11Z)-eicosatrienoate + ATP + CoA = 14,15-epoxy-(5Z,8Z,11Z)-eicosatrienoyl-CoA + AMP + diphosphate. It carries out the reaction 11,12-epoxy-(5Z,8Z,14Z)-eicosatrienoate + ATP + CoA = 11,12-epoxy-(5Z,8Z,14Z)-eicosatrienoyl-CoA + AMP + diphosphate. The enzyme catalyses (9Z)-octadecenoate + ATP + CoA = (9Z)-octadecenoyl-CoA + AMP + diphosphate. Functionally, catalyzes the conversion of long-chain fatty acids to their active form acyl-CoAs for both synthesis of cellular lipids, and degradation via beta-oxidation. ACSL5 may activate fatty acids from exogenous sources for the synthesis of triacylglycerol destined for intracellular storage. Utilizes a wide range of saturated fatty acids with a preference for C16-C18 unsaturated fatty acids. It was suggested that it may also stimulate fatty acid oxidation. At the villus tip of the crypt-villus axis of the small intestine may sensitize epithelial cells to apoptosis specifically triggered by the death ligand TRAIL. May have a role in the survival of glioma cells. In Homo sapiens (Human), this protein is Long-chain-fatty-acid--CoA ligase 5.